A 510-amino-acid polypeptide reads, in one-letter code: Bifunctional purine biosynthesis protein PurH (510 aa).

The MGS-like domain maps to 1–142 (MRALLSVSDK…KNYKDVMVLC (142 aa)).

This sequence belongs to the PurH family.

It carries out the reaction (6R)-10-formyltetrahydrofolate + 5-amino-1-(5-phospho-beta-D-ribosyl)imidazole-4-carboxamide = 5-formamido-1-(5-phospho-D-ribosyl)imidazole-4-carboxamide + (6S)-5,6,7,8-tetrahydrofolate. The catalysed reaction is IMP + H2O = 5-formamido-1-(5-phospho-D-ribosyl)imidazole-4-carboxamide. It participates in purine metabolism; IMP biosynthesis via de novo pathway; 5-formamido-1-(5-phospho-D-ribosyl)imidazole-4-carboxamide from 5-amino-1-(5-phospho-D-ribosyl)imidazole-4-carboxamide (10-formyl THF route): step 1/1. Its pathway is purine metabolism; IMP biosynthesis via de novo pathway; IMP from 5-formamido-1-(5-phospho-D-ribosyl)imidazole-4-carboxamide: step 1/1. The chain is Bifunctional purine biosynthesis protein PurH from Campylobacter jejuni subsp. doylei (strain ATCC BAA-1458 / RM4099 / 269.97).